Here is a 157-residue protein sequence, read N- to C-terminus: Crossover junction endodeoxyribonuclease RuvC (157 aa).

Catalysis depends on residues aspartate 7, glutamate 67, and aspartate 139. Residues aspartate 7, glutamate 67, and aspartate 139 each contribute to the Mg(2+) site.

Belongs to the RuvC family. As to quaternary structure, homodimer which binds Holliday junction (HJ) DNA. The HJ becomes 2-fold symmetrical on binding to RuvC with unstacked arms; it has a different conformation from HJ DNA in complex with RuvA. In the full resolvosome a probable DNA-RuvA(4)-RuvB(12)-RuvC(2) complex forms which resolves the HJ. Mg(2+) serves as cofactor.

The protein localises to the cytoplasm. The catalysed reaction is Endonucleolytic cleavage at a junction such as a reciprocal single-stranded crossover between two homologous DNA duplexes (Holliday junction).. Its function is as follows. The RuvA-RuvB-RuvC complex processes Holliday junction (HJ) DNA during genetic recombination and DNA repair. Endonuclease that resolves HJ intermediates. Cleaves cruciform DNA by making single-stranded nicks across the HJ at symmetrical positions within the homologous arms, yielding a 5'-phosphate and a 3'-hydroxyl group; requires a central core of homology in the junction. The consensus cleavage sequence is 5'-(A/T)TT(C/G)-3'. Cleavage occurs on the 3'-side of the TT dinucleotide at the point of strand exchange. HJ branch migration catalyzed by RuvA-RuvB allows RuvC to scan DNA until it finds its consensus sequence, where it cleaves and resolves the cruciform DNA. This is Crossover junction endodeoxyribonuclease RuvC from Prochlorococcus marinus (strain AS9601).